The chain runs to 213 residues: Ribosomal RNA small subunit methyltransferase G (213 aa).

Residues glycine 81, leucine 86, 132-133 (VE), and arginine 147 each bind S-adenosyl-L-methionine.

The protein belongs to the methyltransferase superfamily. RNA methyltransferase RsmG family.

Its subcellular location is the cytoplasm. The enzyme catalyses guanosine(527) in 16S rRNA + S-adenosyl-L-methionine = N(7)-methylguanosine(527) in 16S rRNA + S-adenosyl-L-homocysteine. Specifically methylates the N7 position of guanine in position 527 of 16S rRNA. The polypeptide is Ribosomal RNA small subunit methyltransferase G (Mannheimia succiniciproducens (strain KCTC 0769BP / MBEL55E)).